The sequence spans 626 residues: MQLLLSSVCMALTSAVIGFAYYQKQQFYPAVVYITKSNASMGVIYIQFFVIVFMFGKLLSKIFLGTLRAAEFEHLLERFWYALTETCLAFTVFRDDFNPRFVALFTVLLFLKSFHWLAEERVDFMERSPVLGWLFHIRVGSLLTVLGILDYVLLIHAYNSTLVRGPTVQLVFGFEYAILLTVIASTAIKYVLHAAEMRTDTPWENKAVFLLYTELVIGLIKVVLYILFVVIMAKIYALPMFVFRPMFFTIRNFRKALNDVIMSRRAIRNMNTLYPDATPEELRQSDNICIICREDMVNHSKKLPCGHIFHTTCLRSWFQRQQTCPTCRLNILRTPTVNSTAMPRQGDEAVAAAAGNPIPAAAGVQPAGGVPPPAPTAVVDGNQARADVNVAGGQALPPNFADLFGDASGLPNGLPNLAGLQIPPPPVMPMISPFMIPPHFGYLTPLPPPPIPQDLTNFTDEELRAMEGLQRDHIVQRLKLLQNINLMLDSAGIMMSQYQSLSARLQLTAVTPATAVNGSADSSVYDMPSTSATAMAQLETHQVTPTAAASSASPTMPAEKVTIEDLGADADEDDIPSTATEAVSIPNSDADFEENSSELGELRKRRLKFLEERNKSAATNERTTAE.

The N-terminal stretch at 1-15 (MQLLLSSVCMALTSA) is a signal peptide. Over 16–38 (VIGFAYYQKQQFYPAVVYITKSN) the chain is Lumenal. Residues 39 to 59 (ASMGVIYIQFFVIVFMFGKLL) form a helical membrane-spanning segment. Residues 60 to 96 (SKIFLGTLRAAEFEHLLERFWYALTETCLAFTVFRDD) are Cytoplasmic-facing. Residues 97–117 (FNPRFVALFTVLLFLKSFHWL) traverse the membrane as a helical segment. Over 118 to 128 (AEERVDFMERS) the chain is Lumenal. Residues 129-149 (PVLGWLFHIRVGSLLTVLGIL) form a helical membrane-spanning segment. At 150–167 (DYVLLIHAYNSTLVRGPT) the chain is on the cytoplasmic side. The helical transmembrane segment at 168-188 (VQLVFGFEYAILLTVIASTAI) threads the bilayer. Topologically, residues 189 to 222 (KYVLHAAEMRTDTPWENKAVFLLYTELVIGLIKV) are lumenal. The helical transmembrane segment at 223–243 (VLYILFVVIMAKIYALPMFVF) threads the bilayer. The interaction with p53/TP53 stretch occupies residues 234-268 (KIYALPMFVFRPMFFTIRNFRKALNDVIMSRRAIR). Residues 244 to 626 (RPMFFTIRNF…AATNERTTAE (383 aa)) lie on the Cytoplasmic side of the membrane. The RING-type; atypical zinc finger occupies 289-328 (CIICREDMVNHSKKLPCGHIFHTTCLRSWFQRQQTCPTCR). The segment at 569-600 (DADEDDIPSTATEAVSIPNSDADFEENSSELG) is disordered. Polar residues predominate over residues 577-587 (STATEAVSIPN).

Belongs to the HRD1 family. In terms of assembly, homodimer. Interacts with p53. May interact with Septin2.

Its subcellular location is the endoplasmic reticulum membrane. It carries out the reaction S-ubiquitinyl-[E2 ubiquitin-conjugating enzyme]-L-cysteine + [acceptor protein]-L-lysine = [E2 ubiquitin-conjugating enzyme]-L-cysteine + N(6)-ubiquitinyl-[acceptor protein]-L-lysine.. It functions in the pathway protein modification; protein ubiquitination. Its function is as follows. Acts as an E3 ubiquitin-protein ligase which accepts ubiquitin specifically from endoplasmic reticulum-associated UBC7 E2 ligase and transfers it to substrates, promoting their degradation. Component of the endoplasmic reticulum quality control (ERQC) system also called ER-associated degradation (ERAD) involved in ubiquitin-dependent degradation of misfolded endoplasmic reticulum proteins. Also promotes the degradation of normal but naturally short-lived proteins. Protects cells from ER stress-induced apoptosis. Sequesters p53 in the cytoplasm and promotes its degradation, thereby negatively regulating its biological function in transcription, cell cycle regulation and apoptosis. The protein is E3 ubiquitin-protein ligase HRD1 (sip3) of Drosophila melanogaster (Fruit fly).